Reading from the N-terminus, the 386-residue chain is Phosphoglycerate kinase (386 aa).

Residues 21 to 23 (DLN), Arg36, 59 to 62 (HLGR), Arg113, and Arg146 contribute to the substrate site. ATP contacts are provided by residues Lys197, Glu314, and 340-343 (GGDT).

This sequence belongs to the phosphoglycerate kinase family. In terms of assembly, monomer.

The protein resides in the cytoplasm. The enzyme catalyses (2R)-3-phosphoglycerate + ATP = (2R)-3-phospho-glyceroyl phosphate + ADP. It participates in carbohydrate degradation; glycolysis; pyruvate from D-glyceraldehyde 3-phosphate: step 2/5. This is Phosphoglycerate kinase from Azotobacter vinelandii (strain DJ / ATCC BAA-1303).